The chain runs to 853 residues: ATP-dependent zinc metalloprotease FtsH (853 aa).

Topologically, residues methionine 1–lysine 5 are cytoplasmic. A helical membrane pass occupies residues tyrosine 6–phenylalanine 26. At serine 27–serine 113 the chain is on the extracellular side. A helical membrane pass occupies residues phenylalanine 114 to phenylalanine 134. Residues phenylalanine 135–glycine 853 are Cytoplasmic-facing. Glycine 205–threonine 212 lines the ATP pocket. Histidine 427 provides a ligand contact to Zn(2+). Glutamate 428 is an active-site residue. Zn(2+) is bound by residues histidine 431 and aspartate 503. Composition is skewed to basic and acidic residues over residues glutamate 619 to valine 632 and alanine 639 to lysine 648. The tract at residues glutamate 619–glycine 853 is disordered. Residues proline 677 to glycine 695 are compositionally biased toward low complexity. 2 stretches are compositionally biased toward polar residues: residues threonine 728 to serine 739 and methionine 770 to proline 788. Residues leucine 796–valine 813 show a composition bias toward basic and acidic residues.

In the central section; belongs to the AAA ATPase family. This sequence in the C-terminal section; belongs to the peptidase M41 family. In terms of assembly, homohexamer. Zn(2+) is required as a cofactor.

The protein resides in the cell membrane. Acts as a processive, ATP-dependent zinc metallopeptidase for both cytoplasmic and membrane proteins. Plays a role in the quality control of integral membrane proteins. This Corynebacterium glutamicum (strain ATCC 13032 / DSM 20300 / JCM 1318 / BCRC 11384 / CCUG 27702 / LMG 3730 / NBRC 12168 / NCIMB 10025 / NRRL B-2784 / 534) protein is ATP-dependent zinc metalloprotease FtsH.